Reading from the N-terminus, the 156-residue chain is MPRRGAVPKREAVADPVYGSKMLTKLINQVMLDGKRSVAEAICYGALDIVRRKTGREPLEVLEQAMKNVMPIVETRPRRVGGANYQVPVEVRADRRQTLGVRWITSFARQRPGKSMKEKLAAEIMDAANGVGGAVKKKEDTHRMAEANKAFAHYRW.

The protein belongs to the universal ribosomal protein uS7 family. In terms of assembly, part of the 30S ribosomal subunit. Contacts proteins S9 and S11.

In terms of biological role, one of the primary rRNA binding proteins, it binds directly to 16S rRNA where it nucleates assembly of the head domain of the 30S subunit. Is located at the subunit interface close to the decoding center, probably blocks exit of the E-site tRNA. This Desulforudis audaxviator (strain MP104C) protein is Small ribosomal subunit protein uS7.